A 477-amino-acid polypeptide reads, in one-letter code: Aspartyl/glutamyl-tRNA(Asn/Gln) amidotransferase subunit B (477 aa).

The protein belongs to the GatB/GatE family. GatB subfamily. In terms of assembly, heterotrimer of A, B and C subunits.

The catalysed reaction is L-glutamyl-tRNA(Gln) + L-glutamine + ATP + H2O = L-glutaminyl-tRNA(Gln) + L-glutamate + ADP + phosphate + H(+). The enzyme catalyses L-aspartyl-tRNA(Asn) + L-glutamine + ATP + H2O = L-asparaginyl-tRNA(Asn) + L-glutamate + ADP + phosphate + 2 H(+). Its function is as follows. Allows the formation of correctly charged Asn-tRNA(Asn) or Gln-tRNA(Gln) through the transamidation of misacylated Asp-tRNA(Asn) or Glu-tRNA(Gln) in organisms which lack either or both of asparaginyl-tRNA or glutaminyl-tRNA synthetases. The reaction takes place in the presence of glutamine and ATP through an activated phospho-Asp-tRNA(Asn) or phospho-Glu-tRNA(Gln). The polypeptide is Aspartyl/glutamyl-tRNA(Asn/Gln) amidotransferase subunit B (Streptococcus sanguinis (strain SK36)).